We begin with the raw amino-acid sequence, 377 residues long: MAKRDYYQVLGVAKNASDDEIKKAYRKLAMKHHPDRNPGNKDAEEHFKEAKEAYEMLSDSQKRAAYDQYGHAGVDPNMAGAGAQGFGGFADAFGDIFGDIFGQAAAGGRGGRSGPQVYRGADLRYSMEITLEQAAHGYDTQIRVPSWVSCEICHGSGAKPGTKPETCPTCNGSGAVRMSQGFFSIQQTCPKCHGTGTYIPEPCTHCHGAGKTKETKTLEVKIPAGIDDGMRIRSAGNGEPGINGGPSGDLYVEIHIKAHAVFERDGDDLHCQMPIPFTKAALGGEIEVPTLAGRATFTVPEGTQSGKTFRLRGKGIKGLRSSIAGDLYVHVQVETPVKLTDAQRDLLQQFEKSLVEGGARHSPQSKSWFDRVKSFFD.

One can recognise a J domain in the interval 5-70 (DYYQVLGVAK…QKRAAYDQYG (66 aa)). The segment at 137-215 (GYDTQIRVPS…CHGAGKTKET (79 aa)) adopts a CR-type zinc-finger fold. Positions 150, 153, 167, 170, 189, 192, 203, and 206 each coordinate Zn(2+). 4 CXXCXGXG motif repeats span residues 150-157 (CEICHGSG), 167-174 (CPTCNGSG), 189-196 (CPKCHGTG), and 203-210 (CTHCHGAG).

The protein belongs to the DnaJ family. Homodimer. Zn(2+) serves as cofactor.

The protein localises to the cytoplasm. Functionally, participates actively in the response to hyperosmotic and heat shock by preventing the aggregation of stress-denatured proteins and by disaggregating proteins, also in an autonomous, DnaK-independent fashion. Unfolded proteins bind initially to DnaJ; upon interaction with the DnaJ-bound protein, DnaK hydrolyzes its bound ATP, resulting in the formation of a stable complex. GrpE releases ADP from DnaK; ATP binding to DnaK triggers the release of the substrate protein, thus completing the reaction cycle. Several rounds of ATP-dependent interactions between DnaJ, DnaK and GrpE are required for fully efficient folding. Also involved, together with DnaK and GrpE, in the DNA replication of plasmids through activation of initiation proteins. This chain is Chaperone protein DnaJ, found in Paraburkholderia phymatum (strain DSM 17167 / CIP 108236 / LMG 21445 / STM815) (Burkholderia phymatum).